Reading from the N-terminus, the 172-residue chain is Adenine phosphoribosyltransferase (172 aa).

It belongs to the purine/pyrimidine phosphoribosyltransferase family. Homodimer.

It localises to the cytoplasm. It catalyses the reaction AMP + diphosphate = 5-phospho-alpha-D-ribose 1-diphosphate + adenine. It functions in the pathway purine metabolism; AMP biosynthesis via salvage pathway; AMP from adenine: step 1/1. Its function is as follows. Catalyzes a salvage reaction resulting in the formation of AMP, that is energically less costly than de novo synthesis. The chain is Adenine phosphoribosyltransferase from Clostridium botulinum (strain Alaska E43 / Type E3).